The primary structure comprises 78 residues: Small ribosomal subunit protein uS17 (78 aa).

It belongs to the universal ribosomal protein uS17 family. Part of the 30S ribosomal subunit.

One of the primary rRNA binding proteins, it binds specifically to the 5'-end of 16S ribosomal RNA. This Parvibaculum lavamentivorans (strain DS-1 / DSM 13023 / NCIMB 13966) protein is Small ribosomal subunit protein uS17.